A 59-amino-acid polypeptide reads, in one-letter code: Early protein GP1A (59 aa).

The sequence is that of Early protein GP1A (1A) from Bacillus phage PZA (Bacteriophage PZA).